The sequence spans 461 residues: Argininosuccinate lyase (461 aa).

The protein belongs to the lyase 1 family. Argininosuccinate lyase subfamily.

Its subcellular location is the cytoplasm. The enzyme catalyses 2-(N(omega)-L-arginino)succinate = fumarate + L-arginine. It functions in the pathway amino-acid biosynthesis; L-arginine biosynthesis; L-arginine from L-ornithine and carbamoyl phosphate: step 3/3. In Laribacter hongkongensis (strain HLHK9), this protein is Argininosuccinate lyase.